Consider the following 119-residue polypeptide: MDRVALRGLKARGHHGVFPKEREDGQTFLVDIVLGLDTRPAAADDDLAKTVHYGIVAEEVVAVVEGEPVNLVETLAERIAQVCLKHEGVEEVEVCVHKPDAPITVPFDDVTVTIIRSRV.

Residues E21, Y53, and 72–73 (VE) contribute to the substrate site. K98 functions as the Proton donor/acceptor in the catalytic mechanism.

It belongs to the DHNA family.

The enzyme catalyses 7,8-dihydroneopterin = 6-hydroxymethyl-7,8-dihydropterin + glycolaldehyde. The protein operates within cofactor biosynthesis; tetrahydrofolate biosynthesis; 2-amino-4-hydroxy-6-hydroxymethyl-7,8-dihydropteridine diphosphate from 7,8-dihydroneopterin triphosphate: step 3/4. Catalyzes the conversion of 7,8-dihydroneopterin to 6-hydroxymethyl-7,8-dihydropterin. In Streptomyces coelicolor (strain ATCC BAA-471 / A3(2) / M145), this protein is Dihydroneopterin aldolase (folB).